Consider the following 237-residue polypeptide: Neural retina-specific leucine zipper protein (237 aa).

Residues Lys20 and Lys24 each participate in a glycyl lysine isopeptide (Lys-Gly) (interchain with G-Cter in SUMO) cross-link. Residues 26-64 (EPSEGRSGVPTASLGSTPYSSVPPSPTFSEPGMVGGGEA) form a disordered region. The tract at residues 30–93 (GRSGVPTASL…SDEVLGLSPD (64 aa)) is minimal transactivation domain (MTD). The segment at 159–185 (RLKQRRRTLKNRGYAQACRSKRLQQRR) is basic motif. Residues 159-222 (RLKQRRRTLK…DLYKARCDRL (64 aa)) form the bZIP domain. Residues 187–208 (LEAERARLAAQLDALRAEVARL) are leucine-zipper.

It belongs to the bZIP family. As to quaternary structure, interacts with FIZ1; this interaction represses transactivation. Interacts (via the leucine-zipper domain) with CRX. Disumoylated at Lys-20. Sumoylation modulates the transcriptional activity of NRL on RHO and NR2E3 promoters, and is required for normal rod differentiation. In terms of processing, phosphorylated. In terms of tissue distribution, expressed in the retina (at protein level).

Its subcellular location is the cytoplasm. The protein localises to the nucleus. In terms of biological role, acts as a transcriptional activator which regulates the expression of several rod-specific genes, including RHO and PDE6B. Also functions as a transcriptional coactivator, stimulating transcription mediated by the transcription factor CRX and NR2E3. Binds to the rhodopsin promoter in a sequence-specific manner. In Mus musculus (Mouse), this protein is Neural retina-specific leucine zipper protein (Nrl).